The sequence spans 578 residues: NADPH oxidase 4 (578 aa).

Residues Met1 to His16 are Cytoplasmic-facing. A helical transmembrane segment spans residues Leu17–Tyr37. Residues Asn38–Ser62 lie on the Extracellular side of the membrane. In terms of domain architecture, Ferric oxidoreductase spans Arg58–Ile303. A helical transmembrane segment spans residues Val63 to Leu83. The Cytoplasmic portion of the chain corresponds to Arg84–Leu104. Residues His105–Val125 traverse the membrane as a helical segment. Residues Asn126–Leu154 lie on the Extracellular side of the membrane. The N-linked (GlcNAc...) asparagine glycan is linked to Asn133. A helical transmembrane segment spans residues Leu155 to Val175. Residues Thr176–Asp188 are Cytoplasmic-facing. A helical membrane pass occupies residues Ile189–Ser209. The Extracellular segment spans residues Gly210–Glu424. An E-loop; essential for H2O2 generating catalytic activity region spans residues Asn218–Glu273. Asn230 carries N-linked (GlcNAc...) asparagine glycosylation. The interval His248–Glu575 is mediates interaction with TLR4. The FAD-binding FR-type domain maps to Arg304–Glu419. Residues Val425–Leu445 traverse the membrane as a helical segment. At Leu446 to Ser578 the chain is on the cytoplasmic side.

Interacts with, relocalizes and stabilizes CYBA/p22phox. Interacts with TLR4. Interacts with protein disulfide isomerase. Interacts with PPP1R15A. Interacts with LRRC8A; this interaction prevents the ubiquitin-mediated degradation of LRRC8A. Heme is required as a cofactor. Post-translationally, N-glycosylation is required for the function. In terms of tissue distribution, EXpressed in brain, in all layers of the cerebellum, in pyramidal cells of the Ammon horn and in Purkinje cells (at protein level). Expressed in osteoclasts, leukocytes, kidney, liver and lung.

The protein localises to the cytoplasm. It is found in the endoplasmic reticulum membrane. The protein resides in the cell membrane. Its subcellular location is the cell junction. It localises to the focal adhesion. The protein localises to the nucleus. It catalyses the reaction NADPH + 2 O2 = 2 superoxide + NADP(+) + H(+). The enzyme catalyses NADPH + O2 + H(+) = H2O2 + NADP(+). With respect to regulation, activated by insulin. Inhibited by diphenylene iodonium. Inhibited by plumbagin. Activated by phorbol 12-myristate 13-acetate (PMA). In terms of biological role, NADPH oxidase that catalyzes predominantly the reduction of oxygen to H2O2. Can also catalyze to a smaller extent, the reduction of oxygen to superoxide. May function as an oxygen sensor regulating the KCNK3/TASK-1 potassium channel and HIF1A activity. May regulate insulin signaling cascade. May play a role in apoptosis, bone resorption and lipolysaccharide-mediated activation of NFKB. May produce superoxide in the nucleus and play a role in regulating gene expression upon cell stimulation. Promotes ferroptosis, reactive oxygen species production and reduced glutathione (GSH) levels by activating NLRP3 inflammasome activation and cytokine release. This chain is NADPH oxidase 4 (Nox4), found in Mus musculus (Mouse).